Reading from the N-terminus, the 365-residue chain is Protein-glutamate methylesterase/protein-glutamine glutaminase (365 aa).

The Response regulatory domain maps to 5–122; that stretch reads KVLIVDDSAF…SLDIRKIGEK (118 aa). Asp-56 bears the 4-aspartylphosphate mark. Residues 146–155 show a composition bias toward basic and acidic residues; it reads IKKEKQDESS. Positions 146-167 are disordered; the sequence is IKKEKQDESSTPKPQVEKTSGL. The span at 156–167 shows a compositional bias: polar residues; the sequence is TPKPQVEKTSGL. Residues 177–363 enclose the CheB-type methylesterase domain; that stretch reads ILIGSSTGGP…LEIIKFAKKI (187 aa). Active-site residues include Ser-182, His-208, and Asp-305.

Belongs to the CheB family. Post-translationally, phosphorylated by CheA. Phosphorylation of the N-terminal regulatory domain activates the methylesterase activity.

It is found in the cytoplasm. The enzyme catalyses [protein]-L-glutamate 5-O-methyl ester + H2O = L-glutamyl-[protein] + methanol + H(+). It catalyses the reaction L-glutaminyl-[protein] + H2O = L-glutamyl-[protein] + NH4(+). Its function is as follows. Involved in chemotaxis. Part of a chemotaxis signal transduction system that modulates chemotaxis in response to various stimuli. Catalyzes the demethylation of specific methylglutamate residues introduced into the chemoreceptors (methyl-accepting chemotaxis proteins or MCP) by CheR. Also mediates the irreversible deamidation of specific glutamine residues to glutamic acid. The sequence is that of Protein-glutamate methylesterase/protein-glutamine glutaminase from Methanococcus maripaludis (strain DSM 14266 / JCM 13030 / NBRC 101832 / S2 / LL).